Consider the following 87-residue polypeptide: Glutaredoxin (87 aa).

One can recognise a Glutaredoxin domain in the interval 1–87 (MFKVYGYDSN…GFDQLREYFK (87 aa)). A disulfide bridge connects residues Cys-14 and Cys-17.

Belongs to the glutaredoxin family.

Serves as a reducing agent for the phage-induced ribonucleotide reductase, but not for the bacterial ones. This specificity may be the result of sequence differences around the redox-active disulfide bond. The oxidized form accepts electrons from bacterial glutathione and will, in turn, reduce other small disulfides. Can also be reduced by NADPH and by bacterial thioredoxin reductase. This chain is Glutaredoxin (NRDC), found in Enterobacteria phage T4 (Bacteriophage T4).